The following is a 183-amino-acid chain: Beta-defensin 129 (183 aa).

An N-terminal signal peptide occupies residues 1 to 19 (MKLLFPIFASLMLQYQVNT). Intrachain disulfides connect cysteine 27/cysteine 53, cysteine 34/cysteine 48, and cysteine 38/cysteine 54. The disordered stretch occupies residues 142 to 183 (ATSAKSNTKESGDSATASPPPAPPPPNILPTPSLELEEAEEQ). Over residues 159-170 (SPPPAPPPPNIL) the composition is skewed to pro residues.

It belongs to the beta-defensin family.

The protein localises to the secreted. Its function is as follows. Has antibacterial activity. This is Beta-defensin 129 (DEFB129) from Macaca fascicularis (Crab-eating macaque).